The following is a 544-amino-acid chain: Dynein intermediate chain 1 (544 aa).

WD repeat units lie at residues 241–281, 289–330, 342–387, 402–441, 461–501, and 506–544; these read KARS…YPVS, GHLE…RPSE, SQCI…QPSN, VMTSNSQNVFLEKNKDFALTSSFDWTVRLWQCSPSRNQHE, THKA…EAPV, and PDGKPLNKIAWQPEKRNLACGGLNGNVHIYKHLSPNLAN.

Belongs to the dynein intermediate chain family.

It localises to the cytoplasm. Has a role in meiotic nuclear divsion where it promotes the movement of 'horsetails'. This is Dynein intermediate chain 1 (dic1) from Schizosaccharomyces pombe (strain 972 / ATCC 24843) (Fission yeast).